Reading from the N-terminus, the 98-residue chain is Gas vesicle protein J2 (98 aa).

Residues 75–98 (AGVDADDSKSVLERPDPPTTEGSE) form a disordered region. A compositionally biased stretch (basic and acidic residues) spans 80–90 (DDSKSVLERPD).

It belongs to the gas vesicle GvpA family. GvpF to GvpM interact with each other in vitro, and may form multi-subunit complex(es). Interacts with GvpA.

It is found in the gas vesicle. In terms of biological role, a minor component of the gas vesicle. Proteins GvpF to GvpM might be involved in nucleating gas vesicle formation. Gas vesicles are hollow, gas filled proteinaceous nanostructures found in several microbial planktonic microorganisms. They allow positioning of halobacteria at the optimal depth for growth in the poorly aerated, shallow brine pools of their habitat. Its function is as follows. Expression of 2 c-vac DNA fragments containing 2 divergently transcribed regions (gvpE-gvpF-gvpG-gvpH-gvpI-gvpJ-gvpK-gvpL-gvpM and gvpA-gvpC-gvpN-gvpO) allows H.volcanii to produce gas vesicles. The polypeptide is Gas vesicle protein J2 (Halobacterium salinarum (strain ATCC 700922 / JCM 11081 / NRC-1) (Halobacterium halobium)).